A 152-amino-acid chain; its full sequence is Peptide deformylase (152 aa).

2 residues coordinate Fe cation: Cys88 and His130. Residue Glu131 is part of the active site. Residue His134 coordinates Fe cation.

This sequence belongs to the polypeptide deformylase family. Requires Fe(2+) as cofactor.

The catalysed reaction is N-terminal N-formyl-L-methionyl-[peptide] + H2O = N-terminal L-methionyl-[peptide] + formate. Removes the formyl group from the N-terminal Met of newly synthesized proteins. Requires at least a dipeptide for an efficient rate of reaction. N-terminal L-methionine is a prerequisite for activity but the enzyme has broad specificity at other positions. This is Peptide deformylase from Syntrophomonas wolfei subsp. wolfei (strain DSM 2245B / Goettingen).